We begin with the raw amino-acid sequence, 474 residues long: 3-isopropylmalate dehydratase large subunit (474 aa).

Positions 353, 414, and 417 each coordinate [4Fe-4S] cluster.

The protein belongs to the aconitase/IPM isomerase family. LeuC type 1 subfamily. In terms of assembly, heterodimer of LeuC and LeuD. The cofactor is [4Fe-4S] cluster.

It carries out the reaction (2R,3S)-3-isopropylmalate = (2S)-2-isopropylmalate. Its pathway is amino-acid biosynthesis; L-leucine biosynthesis; L-leucine from 3-methyl-2-oxobutanoate: step 2/4. Catalyzes the isomerization between 2-isopropylmalate and 3-isopropylmalate, via the formation of 2-isopropylmaleate. The protein is 3-isopropylmalate dehydratase large subunit of Pseudomonas aeruginosa (strain LESB58).